A 240-amino-acid chain; its full sequence is Ribonuclease PH (240 aa).

Residues arginine 87 and 125–127 contribute to the phosphate site; that span reads GTR.

The protein belongs to the RNase PH family. Homohexameric ring arranged as a trimer of dimers.

The enzyme catalyses tRNA(n+1) + phosphate = tRNA(n) + a ribonucleoside 5'-diphosphate. In terms of biological role, phosphorolytic 3'-5' exoribonuclease that plays an important role in tRNA 3'-end maturation. Removes nucleotide residues following the 3'-CCA terminus of tRNAs; can also add nucleotides to the ends of RNA molecules by using nucleoside diphosphates as substrates, but this may not be physiologically important. Probably plays a role in initiation of 16S rRNA degradation (leading to ribosome degradation) during starvation. The protein is Ribonuclease PH of Pseudomonas fluorescens (strain SBW25).